The chain runs to 245 residues: Dehydrogenase/reductase SDR family member 6 (245 aa).

NAD(+) contacts are provided by residues 16-18, D37, and D58; that span reads QGI. R144 provides a ligand contact to substrate. Y147 functions as the Proton acceptor in the catalytic mechanism. NAD(+) is bound by residues K151 and 180–184; that span reads VDTPS. Residues R188 and R205 each contribute to the substrate site.

Belongs to the short-chain dehydrogenases/reductases (SDR) family. Homotetramer.

It is found in the cytoplasm. It carries out the reaction cis-4-hydroxy-L-proline + NAD(+) = 4-oxo-L-proline + NADH + H(+). The catalysed reaction is (R)-3-hydroxybutanoate + NAD(+) = acetoacetate + NADH + H(+). Its pathway is amino-acid metabolism. It functions in the pathway siderophore biosynthesis. Its function is as follows. NAD(H)-dependent dehydrogenase/reductase with a preference for cyclic substrates. Catalyzes stereoselective conversion of 4-oxo-L-proline to cis-4-hydroxy-L-proline, likely a detoxification mechanism for ketoprolines. Mediates the formation of 2,5-dihydroxybenzoate (2,5-DHBA), a siderophore that chelates free cytoplasmic iron and associates with LCN2, thereby regulating iron transport and homeostasis while protecting cells against free radical-induced oxidative stress. The iron-siderophore complex is imported into mitochondria, providing an iron source for mitochondrial metabolic processes in particular heme synthesis. May act as a 3-hydroxybutyrate dehydrogenase. The protein is Dehydrogenase/reductase SDR family member 6 of Rattus norvegicus (Rat).